Reading from the N-terminus, the 1102-residue chain is Voltage-gated delayed rectifier potassium channel KCNH8 (1102 aa).

At 1–225 (MPVMKGLLAP…HFSTFKAGWD (225 aa)) the chain is on the cytoplasmic side. A PAS domain is found at 18–90 (IATRFDGTHS…LQIEKSLEEK (73 aa)). The 53-residue stretch at 93–145 (FKGEIMFYKKNGAPFWCLLDIVPIKNEKGDVVLFLASFKDITDTKVKITSEDK) folds into the PAC domain. The helical transmembrane segment at 226 to 246 (WLILLATFYVAVTVPYNVCFI) threads the bilayer. Over 247 to 255 (GNEDLSTTR) the chain is Extracellular. Residues 256–276 (STTVSDIAVEILFIIDIILNF) form a helical membrane-spanning segment. The Cytoplasmic segment spans residues 277–298 (RTTYVSKSGQVIFEARSICIHY). The helical transmembrane segment at 299–319 (VTTWFIIDLIAALPFDLLYAF) threads the bilayer. An N-linked (GlcNAc...) asparagine glycan is attached at asparagine 320. Topologically, residues 320–327 (NVTVVSLV) are extracellular. A helical; Voltage-sensor membrane pass occupies residues 328–348 (HLLKTVRLLRLLRLLQKLDRY). Over 349–353 (SQHST) the chain is Cytoplasmic. Residues 354–374 (IVLTLLMSMFALLAHWMACIW) form a helical membrane-spanning segment. Over 375–419 (YVIGKMEREDNSLLKWEVGWLHELGKRLESPYYGNNTLGGPSIRS) the chain is Extracellular. An N-linked (GlcNAc...) asparagine glycan is attached at asparagine 409. An intramembrane region (pore-forming) is located at residues 420-440 (AYIAALYFTLSSLTSVGFGNV). The short motif at 434 to 439 (SVGFGN) is the Selectivity filter element. The Extracellular segment spans residues 441–448 (SANTDAEK). Residues 449 to 469 (IFSICTMLIGALMHALVFGNV) form a helical membrane-spanning segment. The Cytoplasmic segment spans residues 470 to 1102 (TAIIQRMYSR…DVKDSKAINV (633 aa)). The segment at 551 to 668 (LFECASRGCL…HKFVEDIQHD (118 aa)) is cNMP-binding domain. Disordered stretches follow at residues 683–744 (SRLS…KTGS), 762–793 (PFHS…KEKN), 818–845 (EDGN…ISPS), and 960–983 (LVGS…LHHS). Over residues 710-723 (VEDEEEEEVEEEET) the composition is skewed to acidic residues. Basic and acidic residues predominate over residues 777–793 (TKQEADPPNHGTRKEKN). Residues 968-982 (TEAHEQSPVDSELHH) show a composition bias toward basic and acidic residues.

Belongs to the potassium channel family. H (Eag) (TC 1.A.1.20) subfamily. Kv12.1/KCNH8 sub-subfamily. The potassium channel is probably composed of a homo- or heterotetrameric complex of pore-forming alpha subunits that can associate with modulating beta subunits. As to expression, detected in superior cervical, mesenteric and coeliac ganglia. Expressed in brain (piriform cortex, olfactory tubercle, cerebral cortex, hippocampus pyramidial cells and dentate gyrus and basal ganglia of caudate/putamen and accumbens nucleus). Expressed in pituitary.

The protein localises to the membrane. It carries out the reaction K(+)(in) = K(+)(out). Pore-forming (alpha) subunit of a voltage-gated delayed rectifier potassium channel that mediates outward-rectifying potassium currents. Elicits a slowly activating, non-inactivating and slowly deactivation outwards potassium current at depolarizating voltages from -30 mV to +50mV. Shows no obvious change in the activation rate from different holding potentials. Activation is strongly dependent on the pH of the external solution. This Rattus norvegicus (Rat) protein is Voltage-gated delayed rectifier potassium channel KCNH8.